The sequence spans 874 residues: Leucine--tRNA ligase (874 aa).

The 'HIGH' region motif lies at 47-57; sequence PYPSGKLHMGH. Residues 636–640 carry the 'KMSKS' region motif; the sequence is KMSKS. Position 639 (Lys639) interacts with ATP.

Belongs to the class-I aminoacyl-tRNA synthetase family.

The protein localises to the cytoplasm. The enzyme catalyses tRNA(Leu) + L-leucine + ATP = L-leucyl-tRNA(Leu) + AMP + diphosphate. This is Leucine--tRNA ligase from Acinetobacter baumannii (strain AB307-0294).